The following is a 184-amino-acid chain: Glutathione-regulated potassium-efflux system ancillary protein KefG (184 aa).

This sequence belongs to the NAD(P)H dehydrogenase (quinone) family. KefG subfamily. As to quaternary structure, interacts with KefB.

Its subcellular location is the cell inner membrane. It catalyses the reaction a quinone + NADH + H(+) = a quinol + NAD(+). It carries out the reaction a quinone + NADPH + H(+) = a quinol + NADP(+). Regulatory subunit of a potassium efflux system that confers protection against electrophiles. Required for full activity of KefB. This chain is Glutathione-regulated potassium-efflux system ancillary protein KefG, found in Escherichia coli O8 (strain IAI1).